The primary structure comprises 297 residues: Acetyl-coenzyme A carboxylase carboxyl transferase subunit beta (297 aa).

Positions 27-296 constitute a CoA carboxyltransferase N-terminal domain; that stretch reads LWHKCPSCEA…PEAAKEVAAV (270 aa). Positions 31, 34, 50, and 53 each coordinate Zn(2+). The segment at 31-53 adopts a C4-type zinc-finger fold; it reads CPSCEAVLYRPELEKTLDVCPKC.

Belongs to the AccD/PCCB family. Acetyl-CoA carboxylase is a heterohexamer composed of biotin carboxyl carrier protein (AccB), biotin carboxylase (AccC) and two subunits each of ACCase subunit alpha (AccA) and ACCase subunit beta (AccD). Requires Zn(2+) as cofactor.

It is found in the cytoplasm. The catalysed reaction is N(6)-carboxybiotinyl-L-lysyl-[protein] + acetyl-CoA = N(6)-biotinyl-L-lysyl-[protein] + malonyl-CoA. It functions in the pathway lipid metabolism; malonyl-CoA biosynthesis; malonyl-CoA from acetyl-CoA: step 1/1. Its function is as follows. Component of the acetyl coenzyme A carboxylase (ACC) complex. Biotin carboxylase (BC) catalyzes the carboxylation of biotin on its carrier protein (BCCP) and then the CO(2) group is transferred by the transcarboxylase to acetyl-CoA to form malonyl-CoA. The chain is Acetyl-coenzyme A carboxylase carboxyl transferase subunit beta from Pseudomonas entomophila (strain L48).